We begin with the raw amino-acid sequence, 239 residues long: 1-(5-phosphoribosyl)-5-[(5-phosphoribosylamino)methylideneamino] imidazole-4-carboxamide isomerase (239 aa).

Asp-9 functions as the Proton acceptor in the catalytic mechanism. Asp-131 serves as the catalytic Proton donor.

The protein belongs to the HisA/HisF family.

The protein resides in the cytoplasm. It catalyses the reaction 1-(5-phospho-beta-D-ribosyl)-5-[(5-phospho-beta-D-ribosylamino)methylideneamino]imidazole-4-carboxamide = 5-[(5-phospho-1-deoxy-D-ribulos-1-ylimino)methylamino]-1-(5-phospho-beta-D-ribosyl)imidazole-4-carboxamide. It participates in amino-acid biosynthesis; L-histidine biosynthesis; L-histidine from 5-phospho-alpha-D-ribose 1-diphosphate: step 4/9. The protein is 1-(5-phosphoribosyl)-5-[(5-phosphoribosylamino)methylideneamino] imidazole-4-carboxamide isomerase of Bacteroides fragilis (strain ATCC 25285 / DSM 2151 / CCUG 4856 / JCM 11019 / LMG 10263 / NCTC 9343 / Onslow / VPI 2553 / EN-2).